The primary structure comprises 355 residues: Peptide chain release factor 1 (355 aa).

Glutamine 231 is subject to N5-methylglutamine. A compositionally biased stretch (basic and acidic residues) spans lysine 280–glutamine 293. A disordered region spans residues lysine 280–asparagine 307.

This sequence belongs to the prokaryotic/mitochondrial release factor family. Post-translationally, methylated by PrmC. Methylation increases the termination efficiency of RF1.

The protein resides in the cytoplasm. In terms of biological role, peptide chain release factor 1 directs the termination of translation in response to the peptide chain termination codons UAG and UAA. The sequence is that of Peptide chain release factor 1 from Campylobacter hominis (strain ATCC BAA-381 / DSM 21671 / CCUG 45161 / LMG 19568 / NCTC 13146 / CH001A).